Here is a 353-residue protein sequence, read N- to C-terminus: GTPase Obg (353 aa).

One can recognise an Obg domain in the interval Met-1–Leu-159. The OBG-type G domain occupies Ala-160 to Thr-334. GTP-binding positions include Gly-166–Ser-173, Phe-191–His-195, Asp-213–Gly-216, Asn-284–Asp-287, and Ser-315–Ala-317. Positions 173 and 193 each coordinate Mg(2+).

The protein belongs to the TRAFAC class OBG-HflX-like GTPase superfamily. OBG GTPase family. As to quaternary structure, monomer. Requires Mg(2+) as cofactor.

The protein resides in the cytoplasm. In terms of biological role, an essential GTPase which binds GTP, GDP and possibly (p)ppGpp with moderate affinity, with high nucleotide exchange rates and a fairly low GTP hydrolysis rate. Plays a role in control of the cell cycle, stress response, ribosome biogenesis and in those bacteria that undergo differentiation, in morphogenesis control. In Dichelobacter nodosus (strain VCS1703A), this protein is GTPase Obg.